Reading from the N-terminus, the 303-residue chain is Lysosomal amino acid transporter 1 homolog (303 aa).

Topologically, residues 1–38 (MAEGLRAPPPPGNGSECPDGARWVLRLLGECARDGRDV) are lumenal. The N-linked (GlcNAc...) asparagine glycan is linked to Asn13. The region spanning 36 to 102 (RDVGSALLGL…LANQLPLQVY (67 aa)) is the PQ-loop 1 domain. A helical transmembrane segment spans residues 39–59 (GSALLGLLSIGCFAAAALPQF). The Cytoplasmic segment spans residues 60–73 (YQACKTGIMDRALS). A helical membrane pass occupies residues 74 to 94 (IYFLLGWLGGDLLNLIGSFLA). Residues 95–96 (NQ) lie on the Lumenal side of the membrane. The chain crosses the membrane as a helical span at residues 97–117 (LPLQVYTAVYYVLADLVMLSL). Over 118 to 131 (YGYYKAKNWGTGAT) the chain is Cytoplasmic. Residues 132–152 (ASINAACLFCLLGTATTLTVL) traverse the membrane as a helical segment. Topologically, residues 153-182 (SHDTGPAPNPAAFGGRSLLSLGLEGPGPEP) are lumenal. Residues 183 to 203 (ISKTEIIGFAIGSISSVLYLC) traverse the membrane as a helical segment. The region spanning 186 to 251 (TEIIGFAIGS…LKNPEPGQSE (66 aa)) is the PQ-loop 2 domain. Residues 204–220 (SRLPQIYTNYRRKSTAG) are Cytoplasmic-facing. A helical transmembrane segment spans residues 221 to 241 (VSFLLFALVMLGNLLYGTSVL). Topologically, residues 242 to 260 (LKNPEPGQSEGDYILHHLP) are lumenal. Residues 261–281 (WLIGSLGVLSLDVIISFQFLA) form a helical membrane-spanning segment. Residues 282–303 (YRTGQPSAGEEREALLAEHGDS) lie on the Cytoplasmic side of the membrane. The Di-leucine motif motif lies at 296-297 (LL).

This sequence belongs to the laat-1 family.

It localises to the lysosome membrane. In terms of biological role, amino acid transporter that specifically mediates the pH-dependent export of the cationic amino acids arginine, histidine and lysine from lysosomes. This Gallus gallus (Chicken) protein is Lysosomal amino acid transporter 1 homolog (SLC66A1).